The primary structure comprises 144 residues: Granulocyte-macrophage colony-stimulating factor (144 aa).

Residues 1-17 form the signal peptide; sequence MWLQSLLLLGTVACSIS. O-linked (GalNAc...) serine glycosylation is found at Ser-22, Ser-24, and Ser-26. The O-linked (GalNAc...) threonine; partial glycan is linked to Thr-27. 2 N-linked (GlcNAc...) asparagine glycosylation sites follow: Asn-44 and Asn-54. 2 disulfide bridges follow: Cys-71–Cys-113 and Cys-105–Cys-138.

The protein belongs to the GM-CSF family. In terms of assembly, monomer. The signaling GM-CSF receptor complex is a dodecamer of two head-to-head hexamers of two alpha, two beta, and two ligand subunits.

Its subcellular location is the secreted. In terms of biological role, cytokine that stimulates the growth and differentiation of hematopoietic precursor cells from various lineages, including granulocytes, macrophages, eosinophils and erythrocytes. This is Granulocyte-macrophage colony-stimulating factor (CSF2) from Homo sapiens (Human).